Reading from the N-terminus, the 365-residue chain is DNA polymerase IV (365 aa).

Residues 7–188 enclose the UmuC domain; sequence IIHIDMDAFY…LPVNKFFGVG (182 aa). Mg(2+) is bound by residues aspartate 11 and aspartate 106. Glutamate 107 is an active-site residue.

This sequence belongs to the DNA polymerase type-Y family. Monomer. The cofactor is Mg(2+).

It is found in the cytoplasm. The enzyme catalyses DNA(n) + a 2'-deoxyribonucleoside 5'-triphosphate = DNA(n+1) + diphosphate. In terms of biological role, poorly processive, error-prone DNA polymerase involved in untargeted mutagenesis. Copies undamaged DNA at stalled replication forks, which arise in vivo from mismatched or misaligned primer ends. These misaligned primers can be extended by PolIV. Exhibits no 3'-5' exonuclease (proofreading) activity. May be involved in translesional synthesis, in conjunction with the beta clamp from PolIII. This Clostridioides difficile (strain 630) (Peptoclostridium difficile) protein is DNA polymerase IV.